The primary structure comprises 1850 residues: Serine/threonine-protein kinase WNK (1850 aa).

Disordered regions lie at residues 1–108 (MPDS…NALE), 221–253 (QHSI…NNDK), and 272–309 (MVND…EKAA). Composition is skewed to low complexity over residues 16 to 26 (SSVSSTTASTT) and 234 to 251 (PPNT…AANN). The span at 284-309 (DMDKMVSEEERARKEQEKREEEEKAA) shows a compositional bias: basic and acidic residues. The Protein kinase domain occupies 334–596 (LKFDEELGRG…VKQLLVDDFF (263 aa)). Residues Ser344, 416-419 (TELM), and Lys466 contribute to the ATP site. Catalysis depends on Asp483, which acts as the Proton acceptor. The stretch at 693–749 (DHRLLEIKRAKEEEERIREEAEIKEELRLRAEAKEKEKERLEKERLEKKAAAAAAAN) forms a coiled coil. The segment covering 727-742 (EKEKERLEKERLEKKA) has biased composition (basic and acidic residues). Disordered stretches follow at residues 727 to 790 (EKEK…AQQP), 890 to 943 (TPAS…KRKS), 1040 to 1130 (EPPT…AAKP), 1188 to 1249 (SPVS…TPAI), 1588 to 1636 (GTHI…PSHS), 1721 to 1740 (ASLS…DNEG), and 1769 to 1850 (IIPS…IENV). Over residues 751–760 (NPTPIPPTPA) the composition is skewed to pro residues. The span at 776 to 790 (STQTSAEIQQSAQQP) shows a compositional bias: polar residues. Low complexity predominate over residues 890–934 (TPASIASPSPAPSATDVASTTAPVTPAPTPTTTTDGGAAAASTTT). A compositionally biased stretch (basic and acidic residues) spans 1062–1071 (PKIEIEKTPP). A compositionally biased stretch (polar residues) spans 1077–1101 (QEPNNVQVTNVRKVSQESNAESVQS). Low complexity predominate over residues 1188–1207 (SPVSHSLSSNSSPSATTHSN). Polar residues predominate over residues 1208-1217 (MSSIQSTTSV). Positions 1771–1805 (PSSRQSVRSATSSSPSTPPSSSSAPPKSLSSPTKS) are enriched in low complexity. Over residues 1806–1820 (YVSHCSLSIGYGSTA) the composition is skewed to polar residues. The segment covering 1821–1832 (SSEQQQREPSPS) has biased composition (low complexity).

The protein belongs to the protein kinase superfamily. Ser/Thr protein kinase family. WNK subfamily. Interacts with gck-3 (via C-terminus). It depends on Mg(2+) as a cofactor. As to expression, expressed in pharynx, nervous system, hypodermis, spermatheca, excretory cell and canal and body wall muscles.

It localises to the cytoplasm. It catalyses the reaction L-seryl-[protein] + ATP = O-phospho-L-seryl-[protein] + ADP + H(+). The catalysed reaction is L-threonyl-[protein] + ATP = O-phospho-L-threonyl-[protein] + ADP + H(+). Activated in response to hyperosmotic stress: cell shrinkage promotes formation of a membraneless compartment that concentrates wnk-1 with its downstrem substrates. Serine/threonine-protein kinase component of the WNK3-SPAK/OSR1 kinase cascade, which plays an important role in the regulation of electrolyte homeostasis and regulatory volume increase in response to hyperosmotic stress. Wnk-1 mediates regulatory volume increase in response to hyperosmotic stress by acting as a molecular crowding sensor, which senses cell shrinkage and mediates formation of a membraneless compartment by undergoing liquid-liquid phase separation. The membraneless compartment concentrates wnk-1 with its substrates. Phosphorylates gck-3. Plays a role in osmotic stress responses during which it increases gpdh-1 translation, likely by phosphorylating gck-3. Essential for larval development and the tubular formation of the excretory canals. The chain is Serine/threonine-protein kinase WNK from Caenorhabditis elegans.